The chain runs to 77 residues: Exodeoxyribonuclease 7 small subunit (77 aa).

This sequence belongs to the XseB family. In terms of assembly, heterooligomer composed of large and small subunits.

It localises to the cytoplasm. The catalysed reaction is Exonucleolytic cleavage in either 5'- to 3'- or 3'- to 5'-direction to yield nucleoside 5'-phosphates.. Functionally, bidirectionally degrades single-stranded DNA into large acid-insoluble oligonucleotides, which are then degraded further into small acid-soluble oligonucleotides. The protein is Exodeoxyribonuclease 7 small subunit of Carboxydothermus hydrogenoformans (strain ATCC BAA-161 / DSM 6008 / Z-2901).